We begin with the raw amino-acid sequence, 429 residues long: Adenylosuccinate synthetase (429 aa).

GTP-binding positions include 13-19 and 41-43; these read GDEGKGK and GHT. The Proton acceptor role is filled by aspartate 14. Positions 14 and 41 each coordinate Mg(2+). Residues 14 to 17, 39 to 42, threonine 130, arginine 144, glutamine 224, threonine 239, and arginine 303 contribute to the IMP site; these read DEGK and NAGH. Histidine 42 functions as the Proton donor in the catalytic mechanism. 299–305 contributes to the substrate binding site; it reads ATTGRAR. GTP contacts are provided by residues arginine 305, 331 to 333, and 412 to 414; these read KLD and STG.

It belongs to the adenylosuccinate synthetase family. As to quaternary structure, homodimer. The cofactor is Mg(2+).

It is found in the cytoplasm. It carries out the reaction IMP + L-aspartate + GTP = N(6)-(1,2-dicarboxyethyl)-AMP + GDP + phosphate + 2 H(+). The protein operates within purine metabolism; AMP biosynthesis via de novo pathway; AMP from IMP: step 1/2. Its function is as follows. Plays an important role in the de novo pathway of purine nucleotide biosynthesis. Catalyzes the first committed step in the biosynthesis of AMP from IMP. In Psychrobacter cryohalolentis (strain ATCC BAA-1226 / DSM 17306 / VKM B-2378 / K5), this protein is Adenylosuccinate synthetase.